A 130-amino-acid polypeptide reads, in one-letter code: Protachykinin-1 (130 aa).

Positions 1–19 are cleaved as a signal peptide; sequence MKILVAVAVIFFISTQLSA. Positions 20 to 56 are excised as a propeptide; the sequence is EEIGANDDFNYWSDWSDSDQIKEEMPEPFEHLLQRIA. Methionine amide is present on residues M68 and M107.

This sequence belongs to the tachykinin family. The substance P form is cleaved at Pro-59 by the prolyl endopeptidase FAP (seprase) activity (in vitro). Substance P is also cleaved and degraded by Angiotensin-converting enzyme (ACE) and neprilysin (MME).

It is found in the secreted. Tachykinins are active peptides which excite neurons, evoke behavioral responses, are potent vasodilators and secretagogues, and contract (directly or indirectly) many smooth muscles. This chain is Protachykinin-1 (TAC1), found in Bos taurus (Bovine).